A 263-amino-acid polypeptide reads, in one-letter code: Putative protein JayE (263 aa).

Belongs to the Mu gp47/PBSX XkdT family.

The protein is Putative protein JayE (jayE) of Escherichia coli (strain K12).